Reading from the N-terminus, the 602-residue chain is MSNTSSYEKNNPDNLKHNGITIDSEFLTQEPITIPSNGSAVSIDETGSGSKWQDFKDSFKRVKPIEVDPNLSEAEKVAIITAQTPLKHHLKNRHLQMIAIGGAIGTGLLVGSGTALRTGGPASLLIGWGSTGTMIYAMVMALGELAVIFPISGGFTTYATRFIDESFGYANNFNYMLQWLVVLPLEIVSASITVNFWGTDPKYRDGFVALFWLAIVIINMFGVKGYGEAEFVFSFIKVITVVGFIILGIILNCGGGPTGGYIGGKYWHDPGAFAGDTPGAKFKGVCSVFVTAAFSFAGSELVGLAASESVEPRKSVPKAAKQVFWRITLFYILSLLMIGLLVPYNDKSLIGASSVDAAASPFVIAIKTHGIKGLPSVVNVVILIAVLSVGNSAIYACSRTMVALAEQRFLPEIFSYVDRKGRPLVGIAVTSAFGLIAFVAASKKEGEVFNWLLALSGLSSLFTWGGICICHIRFRKALAAQGRGLDELSFKSPTGVWGSYWGLFMVIIMFIAQFYVAVFPVGDSPSAEGFFEAYLSFPLVMVMYIGHKIYKRNWKLFIPAEKMDIDTGRREVDLDLLKQEIAEEKAIMATKPRWYRIWNFWC.

The Cytoplasmic portion of the chain corresponds to Met-1–Leu-95. A Glycyl lysine isopeptide (Lys-Gly) (interchain with G-Cter in ubiquitin) cross-link involves residue Lys-76. The helical transmembrane segment at Gln-96 to Leu-116 threads the bilayer. Topologically, residues Arg-117–Pro-121 are extracellular. A helical membrane pass occupies residues Ala-122–Leu-142. Residues Gly-143–Glu-165 lie on the Cytoplasmic side of the membrane. The chain crosses the membrane as a helical span at residues Ser-166–Leu-185. Residues Glu-186–Arg-204 are Extracellular-facing. A helical transmembrane segment spans residues Asp-205–Lys-224. Over Gly-225–Lys-237 the chain is Cytoplasmic. The helical transmembrane segment at Val-238–Gly-256 threads the bilayer. Over Pro-257–Ala-280 the chain is Extracellular. Residues Lys-281–Gly-298 traverse the membrane as a helical segment. Residues Ser-299–Lys-321 lie on the Cytoplasmic side of the membrane. Residues Gln-322 to Val-342 form a helical membrane-spanning segment. The Extracellular segment spans residues Pro-343–Ser-376. Residues Val-377–Ala-396 traverse the membrane as a helical segment. Over Cys-397–Gly-421 the chain is Cytoplasmic. Residues Arg-422–Ser-442 traverse the membrane as a helical segment. Residues Lys-443–Trp-451 lie on the Extracellular side of the membrane. A helical transmembrane segment spans residues Leu-452–Ile-472. The Cytoplasmic portion of the chain corresponds to Arg-473–Lys-491. Residues Ser-492–Phe-510 traverse the membrane as a helical segment. The Extracellular segment spans residues Ile-511 to Gly-529. Residues Phe-530–Lys-548 traverse the membrane as a helical segment. Over Ile-549–Cys-602 the chain is Cytoplasmic.

The protein belongs to the amino acid-polyamine-organocation (APC) superfamily. YAT (TC 2.A.3.10) family. In terms of processing, active permease is phosphorylated. The addition of glutamine causes rapid dephosphorylation and inactivation of the permease. Ubiquitination by RSP5 and the RSP5-associated proteins BUL1 and BUL2, leads the addition of poly-ubiquitin chains being specifically formed by linkage through the lysine 63 residue of ubiquitin and mediates ammonium-induced endocytosis and degradation in the vacuole.

The protein localises to the cell membrane. The protein resides in the endoplasmic reticulum membrane. In terms of biological role, general amino-acid permease involved in the uptake of all the naturally occurring L-amino-acids, related compounds such as ornithine and citrulline, some D-amino acids, toxic amino acid analogs such as azetidine-2-carboxylate, and the polyamines putrescine and spermidine. Senses its transport substrates to set an appropriate level of transporter activity at the cell surface. Required for FLO11 expression and invasive growth. The protein is General amino-acid permease GAP1 of Saccharomyces cerevisiae (strain ATCC 204508 / S288c) (Baker's yeast).